The chain runs to 190 residues: Large ribosomal subunit protein uL6 (190 aa).

Belongs to the universal ribosomal protein uL6 family.

The protein is Large ribosomal subunit protein uL6 (RpL9) of Spodoptera frugiperda (Fall armyworm).